The sequence spans 427 residues: Trigger factor (427 aa).

A PPIase FKBP-type domain is found at 163–248; it reads GDTVVIDFVG…IHEVKTKEVP (86 aa).

The protein belongs to the FKBP-type PPIase family. Tig subfamily.

It is found in the cytoplasm. It carries out the reaction [protein]-peptidylproline (omega=180) = [protein]-peptidylproline (omega=0). Involved in protein export. Acts as a chaperone by maintaining the newly synthesized protein in an open conformation. Functions as a peptidyl-prolyl cis-trans isomerase. The protein is Trigger factor of Streptococcus agalactiae serotype III (strain NEM316).